Consider the following 155-residue polypeptide: Ribosomal RNA large subunit methyltransferase H (155 aa).

Residues Leu73, Gly104, and 123-128 (ISKMTF) contribute to the S-adenosyl-L-methionine site.

The protein belongs to the RNA methyltransferase RlmH family. Homodimer.

Its subcellular location is the cytoplasm. It catalyses the reaction pseudouridine(1915) in 23S rRNA + S-adenosyl-L-methionine = N(3)-methylpseudouridine(1915) in 23S rRNA + S-adenosyl-L-homocysteine + H(+). Specifically methylates the pseudouridine at position 1915 (m3Psi1915) in 23S rRNA. This is Ribosomal RNA large subunit methyltransferase H from Francisella philomiragia subsp. philomiragia (strain ATCC 25017 / CCUG 19701 / FSC 153 / O#319-036).